The chain runs to 452 residues: Cobyrinate a,c-diamide synthase (452 aa).

Residues 246-439 enclose the GATase cobBQ-type domain; it reads TLAYALDDAF…LHVHFYQDEQ (194 aa). Cysteine 328 (nucleophile) is an active-site residue.

The protein belongs to the CobB/CbiA family. Mg(2+) serves as cofactor.

It carries out the reaction cob(II)yrinate + 2 L-glutamine + 2 ATP + 2 H2O = cob(II)yrinate a,c diamide + 2 L-glutamate + 2 ADP + 2 phosphate + 2 H(+). The protein operates within cofactor biosynthesis; adenosylcobalamin biosynthesis; cob(II)yrinate a,c-diamide from sirohydrochlorin (anaerobic route): step 10/10. Its function is as follows. Catalyzes the ATP-dependent amidation of the two carboxylate groups at positions a and c of cobyrinate, using either L-glutamine or ammonia as the nitrogen source. The polypeptide is Cobyrinate a,c-diamide synthase (Streptococcus sanguinis (strain SK36)).